The primary structure comprises 341 residues: UDP-3-O-acylglucosamine N-acyltransferase (341 aa).

The active-site Proton acceptor is histidine 241.

It belongs to the transferase hexapeptide repeat family. LpxD subfamily. In terms of assembly, homotrimer.

The catalysed reaction is a UDP-3-O-[(3R)-3-hydroxyacyl]-alpha-D-glucosamine + a (3R)-hydroxyacyl-[ACP] = a UDP-2-N,3-O-bis[(3R)-3-hydroxyacyl]-alpha-D-glucosamine + holo-[ACP] + H(+). It participates in bacterial outer membrane biogenesis; LPS lipid A biosynthesis. In terms of biological role, catalyzes the N-acylation of UDP-3-O-acylglucosamine using 3-hydroxyacyl-ACP as the acyl donor. Is involved in the biosynthesis of lipid A, a phosphorylated glycolipid that anchors the lipopolysaccharide to the outer membrane of the cell. The protein is UDP-3-O-acylglucosamine N-acyltransferase of Christiangramia forsetii (strain DSM 17595 / CGMCC 1.15422 / KT0803) (Gramella forsetii).